The chain runs to 227 residues: ATP synthase subunit a (227 aa).

The next 6 membrane-spanning stretches (helical) occupy residues 14–34, 69–89, 98–118, 137–157, 169–189, and 205–223; these read LLNI…FVSF, WVVL…IGLF, QLSM…VYGF, LLVP…PLAL, HLLM…SVML, and IAVA…TLYL.

The protein belongs to the ATPase A chain family. As to quaternary structure, F-type ATPases have 2 components, CF(1) - the catalytic core - and CF(0) - the membrane proton channel. CF(1) has five subunits: alpha(3), beta(3), gamma(1), delta(1), epsilon(1). CF(0) has three main subunits: a, b and c.

Its subcellular location is the mitochondrion inner membrane. Its function is as follows. Mitochondrial membrane ATP synthase (F(1)F(0) ATP synthase or Complex V) produces ATP from ADP in the presence of a proton gradient across the membrane which is generated by electron transport complexes of the respiratory chain. F-type ATPases consist of two structural domains, F(1) - containing the extramembraneous catalytic core and F(0) - containing the membrane proton channel, linked together by a central stalk and a peripheral stalk. During catalysis, ATP synthesis in the catalytic domain of F(1) is coupled via a rotary mechanism of the central stalk subunits to proton translocation. Key component of the proton channel; it may play a direct role in the translocation of protons across the membrane. This chain is ATP synthase subunit a (ATP6), found in Branchiostoma floridae (Florida lancelet).